Consider the following 99-residue polypeptide: Putative membrane protein insertion efficiency factor (99 aa).

This sequence belongs to the UPF0161 family.

The protein localises to the cell inner membrane. Could be involved in insertion of integral membrane proteins into the membrane. This is Putative membrane protein insertion efficiency factor from Salinibacter ruber (strain DSM 13855 / M31).